The sequence spans 618 residues: Transport protein particle subunit trs85-2 (618 aa).

It belongs to the TRS85 family. In terms of assembly, part of the multisubunit TRAPP (transport protein particle) complexes I and II.

The protein localises to the golgi apparatus. Its subcellular location is the cis-Golgi network. Functionally, component of the TRAPP I and TRAPP II complexes. TRAPP I plays a key role in the late stages of endoplasmic reticulum to Golgi traffic. TRAPP II seems to play a role in intra-Golgi transport. Has a role late in meiosis following DNA replication. The sequence is that of Transport protein particle subunit trs85-2 (trs85-2) from Schizosaccharomyces pombe (strain 972 / ATCC 24843) (Fission yeast).